Consider the following 398-residue polypeptide: Acetate kinase (398 aa).

Asparagine 8 contacts Mg(2+). Position 15 (lysine 15) interacts with ATP. Arginine 89 provides a ligand contact to substrate. The active-site Proton donor/acceptor is the aspartate 146. ATP-binding positions include 206–210 (HIGNG), 283–285 (DMR), and 331–335 (GMGEN). Residue glutamate 383 coordinates Mg(2+).

The protein belongs to the acetokinase family. Homodimer. Mg(2+) serves as cofactor. Requires Mn(2+) as cofactor.

The protein localises to the cytoplasm. The enzyme catalyses acetate + ATP = acetyl phosphate + ADP. It participates in metabolic intermediate biosynthesis; acetyl-CoA biosynthesis; acetyl-CoA from acetate: step 1/2. In terms of biological role, catalyzes the formation of acetyl phosphate from acetate and ATP. Can also catalyze the reverse reaction. This Streptococcus pyogenes serotype M4 (strain MGAS10750) protein is Acetate kinase.